Here is a 206-residue protein sequence, read N- to C-terminus: HTH-type transcriptional regulator Hpr (206 aa).

The HTH marR-type domain maps to 13-157 (ALLFSQRMAQ…MMCIIRNIYG (145 aa)). A DNA-binding region (H-T-H motif) is located at residues 63–86 (ISEIAKFGVMHVSTAFNFSKKLEE). The tract at residues 186–206 (SEELEDSADAAEKAAKANQIV) is disordered.

Homodimer.

In terms of biological role, negative regulator of protease production and sporulation. The polypeptide is HTH-type transcriptional regulator Hpr (Bacillus pumilus (strain SAFR-032)).